We begin with the raw amino-acid sequence, 83 residues long: Bowman-Birk type seed trypsin and chymotrypsin inhibitor (83 aa).

7 disulfides stabilise this stretch: Cys-18–Cys-72, Cys-19–Cys-34, Cys-22–Cys-68, Cys-24–Cys-32, Cys-42–Cys-49, Cys-46–Cys-61, and Cys-51–Cys-59.

Belongs to the Bowman-Birk serine protease inhibitor family.

The sequence is that of Bowman-Birk type seed trypsin and chymotrypsin inhibitor from Vigna unguiculata (Cowpea).